Reading from the N-terminus, the 349-residue chain is Protein-glutamate methylesterase/protein-glutamine glutaminase (349 aa).

In terms of domain architecture, Response regulatory spans 5-122 (RVLSVDDSAL…REGMLAYSEM (118 aa)). At D56 the chain carries 4-aspartylphosphate. Residues 152 to 344 (LLSSEKLIAI…QQMLAKISAG (193 aa)) enclose the CheB-type methylesterase domain. Active-site residues include S164, H190, and D286.

The protein belongs to the CheB family. In terms of processing, phosphorylated by CheA. Phosphorylation of the N-terminal regulatory domain activates the methylesterase activity.

The protein resides in the cytoplasm. It catalyses the reaction [protein]-L-glutamate 5-O-methyl ester + H2O = L-glutamyl-[protein] + methanol + H(+). It carries out the reaction L-glutaminyl-[protein] + H2O = L-glutamyl-[protein] + NH4(+). In terms of biological role, involved in chemotaxis. Part of a chemotaxis signal transduction system that modulates chemotaxis in response to various stimuli. Catalyzes the demethylation of specific methylglutamate residues introduced into the chemoreceptors (methyl-accepting chemotaxis proteins or MCP) by CheR. Also mediates the irreversible deamidation of specific glutamine residues to glutamic acid. This Escherichia coli O157:H7 protein is Protein-glutamate methylesterase/protein-glutamine glutaminase.